We begin with the raw amino-acid sequence, 204 residues long: Spermatogenesis-associated protein 46 (204 aa).

Residues 101 to 120 are disordered; sequence SSSSQENTYPREANRKSKHG.

As to expression, testis-specific.

Its subcellular location is the nucleus membrane. Plays a role in spermiogenesis and fertilization. This Mus musculus (Mouse) protein is Spermatogenesis-associated protein 46 (Spata46).